A 529-amino-acid chain; its full sequence is Apolipoprotein N-acyltransferase (529 aa).

The next 5 helical transmembrane spans lie at 8 to 28, 66 to 86, 105 to 125, 178 to 198, and 203 to 223; these read VMLAGGMSRAVMAIAAGAVGA, ILPAFGIGWCFGFGYFVAGLW, LAILGLPALLALFYGFAVAAA, LLGLLSITTLAVFIFASPALI, and GMGPGLALAGLLLAAHFGYGF. Residues 242-491 enclose the CN hydrolase domain; the sequence is VQPAIDQSRK…VGILDATLSG (250 aa). The Proton acceptor role is filled by E286. K350 is an active-site residue. Residue C403 is the Nucleophile of the active site. A helical membrane pass occupies residues 505 to 525; that stretch reads YFWLIFSILMIVAVFPALSFA.

The protein belongs to the CN hydrolase family. Apolipoprotein N-acyltransferase subfamily.

The protein localises to the cell inner membrane. It carries out the reaction N-terminal S-1,2-diacyl-sn-glyceryl-L-cysteinyl-[lipoprotein] + a glycerophospholipid = N-acyl-S-1,2-diacyl-sn-glyceryl-L-cysteinyl-[lipoprotein] + a 2-acyl-sn-glycero-3-phospholipid + H(+). It participates in protein modification; lipoprotein biosynthesis (N-acyl transfer). Its function is as follows. Catalyzes the phospholipid dependent N-acylation of the N-terminal cysteine of apolipoprotein, the last step in lipoprotein maturation. In Agrobacterium fabrum (strain C58 / ATCC 33970) (Agrobacterium tumefaciens (strain C58)), this protein is Apolipoprotein N-acyltransferase.